Reading from the N-terminus, the 358-residue chain is UDP-N-acetylglucosamine--N-acetylmuramyl-(pentapeptide) pyrophosphoryl-undecaprenol N-acetylglucosamine transferase (358 aa).

Residues 12 to 14 (TGG), asparagine 124, arginine 162, serine 185, isoleucine 242, 261 to 266 (ALTVSE), and glutamine 287 contribute to the UDP-N-acetyl-alpha-D-glucosamine site.

It belongs to the glycosyltransferase 28 family. MurG subfamily.

It localises to the cell inner membrane. It catalyses the reaction di-trans,octa-cis-undecaprenyl diphospho-N-acetyl-alpha-D-muramoyl-L-alanyl-D-glutamyl-meso-2,6-diaminopimeloyl-D-alanyl-D-alanine + UDP-N-acetyl-alpha-D-glucosamine = di-trans,octa-cis-undecaprenyl diphospho-[N-acetyl-alpha-D-glucosaminyl-(1-&gt;4)]-N-acetyl-alpha-D-muramoyl-L-alanyl-D-glutamyl-meso-2,6-diaminopimeloyl-D-alanyl-D-alanine + UDP + H(+). The protein operates within cell wall biogenesis; peptidoglycan biosynthesis. Functionally, cell wall formation. Catalyzes the transfer of a GlcNAc subunit on undecaprenyl-pyrophosphoryl-MurNAc-pentapeptide (lipid intermediate I) to form undecaprenyl-pyrophosphoryl-MurNAc-(pentapeptide)GlcNAc (lipid intermediate II). This is UDP-N-acetylglucosamine--N-acetylmuramyl-(pentapeptide) pyrophosphoryl-undecaprenol N-acetylglucosamine transferase from Pseudoalteromonas translucida (strain TAC 125).